We begin with the raw amino-acid sequence, 289 residues long: Pyridoxal kinase PdxY (289 aa).

Residues Ser9 and 44–45 (TQ) contribute to the substrate site. ATP is bound by residues Asp112, Ala144, Glu149, and Lys182. Asp225 is a substrate binding site.

This sequence belongs to the pyridoxine kinase family. PdxY subfamily. As to quaternary structure, homodimer. Mg(2+) is required as a cofactor.

The enzyme catalyses pyridoxal + ATP = pyridoxal 5'-phosphate + ADP + H(+). It functions in the pathway cofactor metabolism; pyridoxal 5'-phosphate salvage; pyridoxal 5'-phosphate from pyridoxal: step 1/1. Functionally, pyridoxal kinase involved in the salvage pathway of pyridoxal 5'-phosphate (PLP). Catalyzes the phosphorylation of pyridoxal to PLP. This Aliivibrio fischeri (strain ATCC 700601 / ES114) (Vibrio fischeri) protein is Pyridoxal kinase PdxY.